A 955-amino-acid chain; its full sequence is Outer capsid protein VP2 (955 aa).

The protein belongs to the orbivirus VP2 family.

Its subcellular location is the virion. In terms of biological role, the VP2 protein is one of the two proteins (with VP5) which constitute the virus particle outer capsid. It is the major target of the host immunogenic response. Responsible for viral attachment to target host cell, probably by binding to sialic acid. This attachment induces virion internalization predominantly through clathrin-dependent endocytosis. This is Outer capsid protein VP2 (Segment-2) from Antilocapra americana (Pronghorn).